We begin with the raw amino-acid sequence, 206 residues long: Potassium channel B446_29190 (206 aa).

A topological domain (cytoplasmic) is located at residue Met1. The helical transmembrane segment at 2 to 25 threads the bilayer; that stretch reads NESGRVEAFSDGVFAIAITLLILD. The short motif at 6–12 is the RxxxFSD motif element; it reads RVEAFSD. Topologically, residues 26 to 44 are extracellular; the sequence is IKVPKADGPGGLWHALGAQ. Residues 31–34 are short helix H1; sequence ADGP. The segment at 36-42 is short helix H2; it reads GLWHALG. A helical transmembrane segment spans residues 45–70; sequence WPSYAAYVVSFLVIGIMWVNHHQVFS. Topologically, residues 71 to 76 are cytoplasmic; it reads YVARVD. Residues 77–102 form a helical membrane-spanning segment; that stretch reads RALMFLNLLVLMVVAAVPWPTAMLAE. At 103–110 the chain is on the extracellular side; it reads YLREDRAS. Residues 111-135 traverse the membrane as a helical segment; it reads HVAAAVYSLVMVAMALAFQALWWHL. Residues 136 to 147 lie on the Cytoplasmic side of the membrane; sequence TRTGHLFDPRVD. The helical transmembrane segment at 148–174 threads the bilayer; that stretch reads APAARATRIRFALGSLGYPLTVGLAFV. At 175-176 the chain is on the extracellular side; that stretch reads SA. A helical transmembrane segment spans residues 177–192; sequence PLTLAAHGLLALYYGF. At 193–206 the chain is on the cytoplasmic side; that stretch reads NQVPVPTREAAAPS.

This sequence belongs to the TMEM175 family. In terms of assembly, homotetramer.

It localises to the membrane. It carries out the reaction K(+)(in) = K(+)(out). Functionally, potassium channel. In Streptomyces collinus (strain DSM 40733 / Tue 365), this protein is Potassium channel B446_29190.